The primary structure comprises 389 residues: Gustatory receptor 68a (389 aa).

At 1–42 (MKIYQDIYPISKPSQIFAILPFYSGDVDDGFRFGGLGRWYGR) the chain is on the cytoplasmic side. The chain crosses the membrane as a helical span at residues 43–63 (LVALIILIGSLTLGEDVLFAS). The Extracellular segment spans residues 64–82 (KEYRLVASAQGDTEEINRT). Residue Asn80 is glycosylated (N-linked (GlcNAc...) asparagine). A helical transmembrane segment spans residues 83-103 (IETLLCIISYTMVVLSSVQNA). At 104-133 (SRHFRTLHDIAKIDEYLLANGFRETYSCRN) the chain is on the cytoplasmic side. Residues 134 to 154 (LTILVTSAAGGVLAVAFYYIH) form a helical membrane-spanning segment. Over 155-164 (YRSGIGAKRQ) the chain is Extracellular. The chain crosses the membrane as a helical span at residues 165 to 185 (IILLLIYFLQLLYSTLLALYL). Over 186 to 236 (RTLMMNLAQRIGFLNQKLDTFNLQDCGHMENWRELSNLIEVLCKFRYITEN) the chain is Cytoplasmic. Residues 237–257 (INCVAGVSLLFYFGFSFYTVT) form a helical membrane-spanning segment. A glycan (N-linked (GlcNAc...) asparagine) is linked at Asn258. At 258 to 281 (NQSYLAFATLTAGSLSSKTEVADT) the chain is on the extracellular side. Residues 282 to 302 (IGLSCIWVLAETITMIVICSA) form a helical membrane-spanning segment. The Cytoplasmic segment spans residues 303 to 352 (CDGLASEVNGTAQILARIYGKSKQFQNLIDKFLTKSIKQDLQFTAYGFFS). A helical transmembrane segment spans residues 353–373 (IDNSTLFKIFSAVTTYLVILI). At 374–389 (QFKQLEDSKVEDISQA) the chain is on the extracellular side.

This sequence belongs to the insect chemoreceptor superfamily. Gustatory receptor (GR) family. Gr21a subfamily. As to expression, expressed in chemosensory neurons of about 20 male-specific gustatory bristles in the forelegs. No expression is seen in the mechanosensory neurons. In larvae, expressed in the ventral pharyngeal sense organ.

The protein resides in the cell membrane. Its function is as follows. Dsx-dependent essential component of pheromone-driven courtship behavior. Recognizes a female pheromone involved in the second step (tapping step) of the courtship display which is essential for efficient execution of the entire courtship sequence and timely mating. Required for detection of the male sex pheromone CH503 which is transferred from males to females during mating and inhibits courtship behavior by other males. Gr68a-expressing neurons in the male foreleg relay signals to the suboesophageal zone (SEZ) and courtship suppression is mediated by the release of the neuropeptide tachykinin from a cluster of 8-10 neurons in the SEZ. In Drosophila melanogaster (Fruit fly), this protein is Gustatory receptor 68a (Gr68a).